We begin with the raw amino-acid sequence, 153 residues long: Superoxide dismutase [Cu-Zn] (153 aa).

His45, His47, and His62 together coordinate Cu cation. Cys56 and Cys145 are oxidised to a cystine. Residues His62, His70, His79, and Asp82 each contribute to the Zn(2+) site. Position 119 (His119) interacts with Cu cation.

It belongs to the Cu-Zn superoxide dismutase family. Homodimer. Cu cation serves as cofactor. The cofactor is Zn(2+).

It localises to the cytoplasm. It catalyses the reaction 2 superoxide + 2 H(+) = H2O2 + O2. Functionally, destroys radicals which are normally produced within the cells and which are toxic to biological systems. This is Superoxide dismutase [Cu-Zn] (Sod) from Chymomyza amoena.